The chain runs to 580 residues: Rap guanine nucleotide exchange factor 5 (580 aa).

Residues 68–201 (DRYVVVSGTP…ELKEFQKILG (134 aa)) enclose the N-terminal Ras-GEF domain. A Ras-GEF domain is found at 345–579 (NTWDLALELM…FELSHRIEPR (235 aa)).

In terms of tissue distribution, widely expressed with highest levels in brain.

The protein localises to the nucleus. Its function is as follows. Guanine nucleotide exchange factor (GEF) for RAP1A, RAP2A and MRAS/M-Ras-GTP. Its association with MRAS inhibits Rap1 activation. In Homo sapiens (Human), this protein is Rap guanine nucleotide exchange factor 5 (RAPGEF5).